The chain runs to 475 residues: GTPase Der (475 aa).

EngA-type G domains lie at 2–166 (LRIA…NIPE) and 213–386 (LKIA…ETVS). Residues 8–15 (GRPNVGKS), 55–59 (DTGGV), 118–121 (NKAD), 219–226 (GRPNVGKS), 266–270 (DTAGL), and 331–334 (NKWD) each bind GTP. The KH-like domain maps to 387–471 (RKVPTPVVNK…PFDLEIKEKA (85 aa)).

It belongs to the TRAFAC class TrmE-Era-EngA-EngB-Septin-like GTPase superfamily. EngA (Der) GTPase family. As to quaternary structure, associates with the 50S ribosomal subunit.

Its function is as follows. GTPase that plays an essential role in the late steps of ribosome biogenesis. This Chlamydia felis (strain Fe/C-56) (Chlamydophila felis) protein is GTPase Der.